Consider the following 894-residue polypeptide: Exocyst complex component 1 (894 aa).

Coiled coils occupy residues 152–199 and 205–259; these read GDEE…LQVL and QSIM…NHLI. Residues 437–495 form a disordered region; it reads SKESKKFATLPRKESAVKQETESLHGSSGKLTGSTSSLNKLSVQSSGSRRSQSSSLLDM. A compositionally biased stretch (basic and acidic residues) spans 438–459; sequence KESKKFATLPRKESAVKQETES. Positions 460–491 are enriched in low complexity; it reads LHGSSGKLTGSTSSLNKLSVQSSGSRRSQSSS. Phosphoserine is present on serine 470. Phosphothreonine is present on threonine 471. 3 positions are modified to phosphoserine: serine 473, serine 487, and serine 501.

This sequence belongs to the SEC3 family. As to quaternary structure, the exocyst complex is composed of EXOC1, EXOC2, EXOC3, EXOC4, EXOC5, EXOC6, EXOC7 and EXOC8. Interacts with EEF1A1. Interacts with SLC6A9; interaction increases the transporter capacity of SLC6A9 probably by promoting its insertion into the cell membrane.

It is found in the midbody. The protein localises to the midbody ring. It localises to the cytoplasm. Its subcellular location is the perinuclear region. The protein resides in the cell membrane. Component of the exocyst complex involved in the docking of exocytic vesicles with fusion sites on the plasma membrane. This Mus musculus (Mouse) protein is Exocyst complex component 1 (Exoc1).